Consider the following 358-residue polypeptide: Uroporphyrinogen decarboxylase (358 aa).

Residues 27 to 31 (RQAGR), Asp-77, Tyr-154, Ser-209, and His-330 each bind substrate.

This sequence belongs to the uroporphyrinogen decarboxylase family. As to quaternary structure, homodimer.

The protein resides in the cytoplasm. The enzyme catalyses uroporphyrinogen III + 4 H(+) = coproporphyrinogen III + 4 CO2. Its pathway is porphyrin-containing compound metabolism; protoporphyrin-IX biosynthesis; coproporphyrinogen-III from 5-aminolevulinate: step 4/4. In terms of biological role, catalyzes the decarboxylation of four acetate groups of uroporphyrinogen-III to yield coproporphyrinogen-III. In Acinetobacter baylyi (strain ATCC 33305 / BD413 / ADP1), this protein is Uroporphyrinogen decarboxylase.